A 430-amino-acid chain; its full sequence is Trigger factor (430 aa).

The PPIase FKBP-type domain occupies 163–248 (GNIAIIDFKG…VKEIKVKEIP (86 aa)).

This sequence belongs to the FKBP-type PPIase family. Tig subfamily.

It localises to the cytoplasm. The enzyme catalyses [protein]-peptidylproline (omega=180) = [protein]-peptidylproline (omega=0). Involved in protein export. Acts as a chaperone by maintaining the newly synthesized protein in an open conformation. Functions as a peptidyl-prolyl cis-trans isomerase. The polypeptide is Trigger factor (Clostridium kluyveri (strain NBRC 12016)).